Reading from the N-terminus, the 333-residue chain is NAC domain-containing protein 26 (333 aa).

In terms of domain architecture, NAC spans 14 to 173 (LPPGFRFHPT…DWAVCRIFHK (160 aa)). A DNA-binding region spans residues 114–179 (IGMKKTLVFY…IFHKSSGIKK (66 aa)). The segment at 143–162 (ADASPPQPPPPPSSAEPPRQ) is disordered. The segment covering 147–157 (PPQPPPPPSSA) has biased composition (pro residues).

In terms of assembly, forms homodimers. Forms heterodimers with NAC20. Forms heterodimers with NAC23. As to expression, expressed in developing seeds.

The protein localises to the nucleus. Transcription factor that acts redundantly with NAC20 to regulate the expression of genes involved in the biosynthesis of starch and storage proteins in grain. Directly binds to the promoters of starch synthase 1 (SS1), pullulanase (PUL), glutelin A1 (GLUA1), glutelins B4 and B5 (GLUB4 and GLUB5), alpha-globulin and 16 kDa prolamin, and activates their expression. Possesses transactivation activity in yeast. The sequence is that of NAC domain-containing protein 26 from Oryza sativa subsp. indica (Rice).